The following is a 162-amino-acid chain: NADH-quinone oxidoreductase subunit I (162 aa).

4Fe-4S ferredoxin-type domains are found at residues 52 to 82 (LRRYPNGEERCIACKLCEAVCPAQAITIEAG) and 93 to 122 (TRYDIDMVKCIYCGMCQEACPVDAIVEGPN). Positions 62, 65, 68, 72, 102, 105, 108, and 112 each coordinate [4Fe-4S] cluster.

This sequence belongs to the complex I 23 kDa subunit family. In terms of assembly, NDH-1 is composed of 14 different subunits. Subunits NuoA, H, J, K, L, M, N constitute the membrane sector of the complex. The cofactor is [4Fe-4S] cluster.

It is found in the cell inner membrane. It carries out the reaction a quinone + NADH + 5 H(+)(in) = a quinol + NAD(+) + 4 H(+)(out). In terms of biological role, NDH-1 shuttles electrons from NADH, via FMN and iron-sulfur (Fe-S) centers, to quinones in the respiratory chain. The immediate electron acceptor for the enzyme in this species is believed to be ubiquinone. Couples the redox reaction to proton translocation (for every two electrons transferred, four hydrogen ions are translocated across the cytoplasmic membrane), and thus conserves the redox energy in a proton gradient. The polypeptide is NADH-quinone oxidoreductase subunit I (Methylobacterium sp. (strain 4-46)).